A 204-amino-acid chain; its full sequence is Probable chorismate pyruvate-lyase (204 aa).

Residues Arg75, Leu113, and Glu160 each coordinate substrate.

Belongs to the UbiC family.

Its subcellular location is the cytoplasm. The enzyme catalyses chorismate = 4-hydroxybenzoate + pyruvate. It participates in cofactor biosynthesis; ubiquinone biosynthesis. Functionally, removes the pyruvyl group from chorismate, with concomitant aromatization of the ring, to provide 4-hydroxybenzoate (4HB) for the ubiquinone pathway. This Alcanivorax borkumensis (strain ATCC 700651 / DSM 11573 / NCIMB 13689 / SK2) protein is Probable chorismate pyruvate-lyase.